The sequence spans 240 residues: Tetrahydromethanopterin S-methyltransferase subunit A (240 aa).

Topologically, residues 1 to 218 are cytoplasmic; the sequence is MADKKEPAPG…KFHSGVHAGK (218 aa). 5-hydroxybenzimidazolylcob(I)amide is bound at residue H85. A helical transmembrane segment spans residues 219-239; that stretch reads IEGAMIGLTVTISLLGLLLLG. R240 is a topological domain (extracellular).

It belongs to the MtrA family. As to quaternary structure, the complex is composed of 8 subunits; MtrA, MtrB, MtrC, MtrD, MtrE, MtrF, MtrG and MtrH. Requires 5-hydroxybenzimidazolylcob(I)amide as cofactor.

The protein resides in the cell membrane. The enzyme catalyses 5-methyl-5,6,7,8-tetrahydromethanopterin + coenzyme M + 2 Na(+)(in) = 5,6,7,8-tetrahydromethanopterin + methyl-coenzyme M + 2 Na(+)(out). Its pathway is one-carbon metabolism; methanogenesis from CO(2); methyl-coenzyme M from 5,10-methylene-5,6,7,8-tetrahydromethanopterin: step 2/2. Part of a complex that catalyzes the formation of methyl-coenzyme M and tetrahydromethanopterin from coenzyme M and methyl-tetrahydromethanopterin. This is an energy-conserving, sodium-ion translocating step. This Methanosarcina barkeri (strain Fusaro / DSM 804) protein is Tetrahydromethanopterin S-methyltransferase subunit A.